The sequence spans 706 residues: Paxillin-like protein 1 (706 aa).

Disordered stretches follow at residues 24–192 (ERAG…EQDL), 222–258 (VLDQ…LNFE), 279–341 (AKQE…TKVE), and 514–537 (IDNS…SSDA). The span at 35 to 64 (PFSSQRNASTGSLQASVKSPPITRQRNVSA) shows a compositional bias: polar residues. A phosphoserine mark is found at Ser43 and Ser63. 2 stretches are compositionally biased toward low complexity: residues 73-86 (KSAY…AYSS) and 117-129 (SSRP…SISR). Basic and acidic residues-rich tracts occupy residues 130-150 (PSER…DRQA) and 222-236 (VLDQ…KEES). The span at 237-252 (SIEYESEGQQEDENDI) shows a compositional bias: acidic residues. The segment covering 279–290 (AKQEEKNTEPKI) has biased composition (basic and acidic residues). Positions 296–308 (TRESNTPSLTMNA) are enriched in polar residues. LIM zinc-binding domains lie at 556-612 (CRAC…CQKH) and 621-672 (CKVC…CGNH).

This chain is Paxillin-like protein 1 (PXL1), found in Saccharomyces cerevisiae (strain ATCC 204508 / S288c) (Baker's yeast).